Reading from the N-terminus, the 221-residue chain is Chalcone--flavanone isomerase 2 (221 aa).

Residues threonine 50, asparagine 115, and serine 192 each coordinate substrate.

It belongs to the chalcone isomerase family.

The enzyme catalyses a chalcone = a flavanone.. It participates in secondary metabolite biosynthesis; flavonoid biosynthesis. Catalyzes the intramolecular cyclization of bicyclic chalcones into tricyclic (S)-flavanones. Responsible for the isomerization of 4,2',4',6'-tetrahydroxychalcone (also termed chalcone) into naringenin. The polypeptide is Chalcone--flavanone isomerase 2 (CHI2) (Lotus japonicus (Lotus corniculatus var. japonicus)).